Here is a 421-residue protein sequence, read N- to C-terminus: MASSSTWGLLLLAGLCCLVPISLAEGLQGHAVQETDVPRHDHEQHQEAACHRIAPNLADFAFSLYRQVARQSNTSNIFLSPVTIARAFAMLSLGTKGATHAEILEGLQFNLTEKAEAEIHEGFQHLLHTLNQPDNQLQLTTGNGLFIDEKAKLVPKFLEDVKNLYHSEAFSINFRDTEEAKKCINDYVEKGSQGKIVDLVDELDKDTVFALVNYIFFKGKWEKPFEVEQTTEEDFHVDEETTVKVPMMNRLGMFDLHHCDKLSSWVLLMDYVATATAFFILPDQGKLHQLEDMLTKEIRAKFLEKRYPSSANLHLPKLTISGTYDLKSLLGNLGITKVFSDEADLSGVTEEQPLKLSKALHRAVLTIDEKGTEATGATILEAIPMSIPPNVKFNKPFLFLIYDTKTKAVLFMGKVMNPTQK.

An N-terminal signal peptide occupies residues 1–24 (MASSSTWGLLLLAGLCCLVPISLA). Residues Asn-73 and Asn-110 are each glycosylated (N-linked (GlcNAc...) asparagine). Residues 376–395 (GATILEAIPMSIPPNVKFNK) are RCL. The residue at position 386 (Ser-386) is a Phosphoserine.

Belongs to the serpin family. As to quaternary structure, interacts with CELA2A. Interacts with ERGIC3 and LMAN1/ERGIC53. Interacts with PRSS1/Trypsin.

The protein localises to the secreted. Functionally, inhibitor of serine proteases. Its primary target is elastase, but it also has a moderate affinity for plasmin and thrombin. The polypeptide is Alpha-1-antitrypsin (SERPINA1) (Sus scrofa (Pig)).